Reading from the N-terminus, the 81-residue chain is Large ribosomal subunit protein bL27 (81 aa).

A compositionally biased stretch (polar residues) spans 1–11 (MATSKSGGSSK). The tract at residues 1 to 26 (MATSKSGGSSKNGRDSISKRLGVKRS) is disordered.

The protein belongs to the bacterial ribosomal protein bL27 family.

This chain is Large ribosomal subunit protein bL27, found in Borrelia turicatae (strain 91E135).